Reading from the N-terminus, the 513-residue chain is MGLQQSKEELVYQQVNYGNADGIRALRAQGAGLEWIDKEGKTPLMVASMRPDLINVVQVLIELGANVNAYRPGSYCGTALHHAAKKGLEQTVHLLLSHGANPFITNDDCHTALDLAREKGHVNVVRAIEGRISLFCGWMRENYGPGFLEAFAPQFLTRKIWAVILPREARNQTRPLKLELTIYPELQASKPQAVIKLWKCQLEEPKFNQANPSVTIFDKGTRTRYKLLPVCEGDKQQLQWFYSACCGIPQVASMVPAQPANAPLPNPSSASSLPSVISTPSKEDAELAMAINASILSAIAEGVPDVQPITTTTATNDWGNPPSNSLNGWGPPDTSAPSKTSGQVPVVTSSSSTYNGWDVPGTSSGQSSSKHNKSQNSTFVVPQEALPSLPVPTAPPLAVGTFYDGPIQYPSIDSTPVDVTMPSADGGTAVSSAKPAENEGDAKPAESDANASNSGNTPPGTCVICLDAPVEGACIPCGHMAGCMSCLKDIESKKWGCPICRAKINQIIRLYAV.

ANK repeat units lie at residues 39 to 69 (EGKT…NVNA), 75 to 104 (YCGT…NPFI), and 108 to 137 (DCHT…LFCG). Polar residues-rich tracts occupy residues 309 to 327 (ITTT…NSLN) and 335 to 355 (SAPS…STYN). Disordered stretches follow at residues 309–378 (ITTT…QNST) and 423–455 (SADG…SNSG). Low complexity predominate over residues 361 to 378 (GTSSGQSSSKHNKSQNST). A compositionally biased stretch (basic and acidic residues) spans 436–446 (AENEGDAKPAE). The RING-type zinc-finger motif lies at 462–501 (CVICLDAPVEGACIPCGHMAGCMSCLKDIESKKWGCPICR).

It catalyses the reaction S-ubiquitinyl-[E2 ubiquitin-conjugating enzyme]-L-cysteine + [acceptor protein]-L-lysine = [E2 ubiquitin-conjugating enzyme]-L-cysteine + N(6)-ubiquitinyl-[acceptor protein]-L-lysine.. It functions in the pathway protein modification; protein ubiquitination. In Oryza sativa subsp. japonica (Rice), this protein is Probable E3 ubiquitin-protein ligase XBOS34 (XBOS34).